The chain runs to 149 residues: UPF0260 protein Pmen_1776 (149 aa).

This sequence belongs to the UPF0260 family.

This chain is UPF0260 protein Pmen_1776, found in Ectopseudomonas mendocina (strain ymp) (Pseudomonas mendocina).